Consider the following 498-residue polypeptide: N-acyl-D-aspartate deacylase (498 aa).

A disordered region spans residues 478–498 (AERPGQVLAPGDAIPWSQQSE).

This sequence belongs to the metallo-dependent hydrolases superfamily. N-acyl-D-amino-acid deacylase family. Zn(2+) is required as a cofactor.

It localises to the cytoplasm. The enzyme catalyses an N-acyl-D-aspartate + H2O = D-aspartate + a carboxylate. The polypeptide is N-acyl-D-aspartate deacylase (Alcaligenes xylosoxydans xylosoxydans (Achromobacter xylosoxidans)).